Here is a 395-residue protein sequence, read N- to C-terminus: Putative 8-amino-7-oxononanoate synthase (395 aa).

Arginine 23 contributes to the substrate binding site. Residue 110–111 (GY) coordinates pyridoxal 5'-phosphate. A substrate-binding site is contributed by histidine 135. Pyridoxal 5'-phosphate contacts are provided by residues serine 182, 207-210 (DEAH), and 239-242 (TFSK). Position 242 is an N6-(pyridoxal phosphate)lysine (lysine 242). A substrate-binding site is contributed by threonine 356.

The protein belongs to the class-II pyridoxal-phosphate-dependent aminotransferase family. BioF subfamily. As to quaternary structure, homodimer. Pyridoxal 5'-phosphate is required as a cofactor.

The catalysed reaction is 6-carboxyhexanoyl-[ACP] + L-alanine + H(+) = (8S)-8-amino-7-oxononanoate + holo-[ACP] + CO2. Its pathway is cofactor biosynthesis; biotin biosynthesis. Its function is as follows. Catalyzes the decarboxylative condensation of pimeloyl-[acyl-carrier protein] and L-alanine to produce 8-amino-7-oxononanoate (AON), [acyl-carrier protein], and carbon dioxide. In Bacillus cereus (strain G9842), this protein is Putative 8-amino-7-oxononanoate synthase (bioF).